A 918-amino-acid chain; its full sequence is UPF0182 protein CPF_0011 (918 aa).

7 helical membrane passes run 8-28 (TVLI…NFII), 46-66 (LIAI…VIAI), 91-111 (FLLS…TTQW), 151-171 (AISL…ALGF), 200-220 (LAVL…LKSY), 243-263 (IFYK…FISI), and 271-291 (IIIS…VAIF). Over residues 857–869 (EENKNSNKDETPK) the composition is skewed to basic and acidic residues. The interval 857–876 (EENKNSNKDETPKNEITSDN) is disordered.

This sequence belongs to the UPF0182 family.

It is found in the cell membrane. The sequence is that of UPF0182 protein CPF_0011 from Clostridium perfringens (strain ATCC 13124 / DSM 756 / JCM 1290 / NCIMB 6125 / NCTC 8237 / Type A).